A 265-amino-acid polypeptide reads, in one-letter code: Probable cyclic nucleotide phosphodiesterase SynWH7803_1390 (265 aa).

Fe cation is bound by residues D9, H11, D49, N86, H157, H196, and H198. AMP contacts are provided by residues H11, D49, and 86 to 87; that span reads NH. H198 serves as a coordination point for AMP.

This sequence belongs to the cyclic nucleotide phosphodiesterase class-III family. Fe(2+) serves as cofactor.

This chain is Probable cyclic nucleotide phosphodiesterase SynWH7803_1390, found in Synechococcus sp. (strain WH7803).